The sequence spans 270 residues: Undecaprenyl-diphosphatase 3 (270 aa).

7 consecutive transmembrane segments (helical) span residues 5 to 25 (YYILKYLILGLFQGLTEPIPI), 42 to 62 (IEGFSFELLVNSASLLAVLLI), 89 to 109 (FFFIIYLVIATIPAGVIGVLF), 117 to 137 (LKGVKMVGISLLITAVGLWII), 192 to 212 (FSFLLYIPVSLGGLLLSITDI), 220 to 240 (TLFVPYIVAFIATFIMTYISL), and 250 to 270 (GNLKYFSFYCIIVGVLTLIFL).

This sequence belongs to the UppP family.

The protein resides in the cell membrane. The enzyme catalyses di-trans,octa-cis-undecaprenyl diphosphate + H2O = di-trans,octa-cis-undecaprenyl phosphate + phosphate + H(+). Functionally, catalyzes the dephosphorylation of undecaprenyl diphosphate (UPP). Confers resistance to bacitracin. The protein is Undecaprenyl-diphosphatase 3 of Bacillus anthracis.